The sequence spans 303 residues: Protoheme IX farnesyltransferase (303 aa).

The next 9 helical transmembrane spans lie at 26–46 (VVALMLLTSLIGMLLAVPGMV), 48–68 (IDILILGNLGIALCAGSAAAV), 98–118 (AILFAAILGLAGMAILMVWVN), 120–140 (LTAWLTLASLVGYAFIYTFWL), 148–168 (IVIGGLAGAAPPLLGWVAVTG), 174–194 (ALLLVLIIFAWTPPHFWALAV), 221–241 (ILLYTFILIAVTLLPYATHML), 244–264 (LYLLGAVVLGIGFLYYAVAMM), and 278–298 (YSIVYLMALFVVMLLDHYLLP).

The protein belongs to the UbiA prenyltransferase family. Protoheme IX farnesyltransferase subfamily.

The protein resides in the cell inner membrane. It carries out the reaction heme b + (2E,6E)-farnesyl diphosphate + H2O = Fe(II)-heme o + diphosphate. Its pathway is porphyrin-containing compound metabolism; heme O biosynthesis; heme O from protoheme: step 1/1. Its function is as follows. Converts heme B (protoheme IX) to heme O by substitution of the vinyl group on carbon 2 of heme B porphyrin ring with a hydroxyethyl farnesyl side group. This is Protoheme IX farnesyltransferase from Saccharophagus degradans (strain 2-40 / ATCC 43961 / DSM 17024).